Consider the following 600-residue polypeptide: Proline dehydrogenase 1, mitochondrial (600 aa).

The disordered stretch occupies residues 155–177 (AEHKEMESCTSAAERDGSGTNKR). Lysine 368 and lysine 486 each carry N6-acetyllysine.

The protein belongs to the proline oxidase family. FAD is required as a cofactor. In terms of tissue distribution, expressed in lung, skeletal muscle and brain, to a lesser extent in heart and kidney, and weakly in liver, placenta and pancreas.

The protein resides in the mitochondrion matrix. It catalyses the reaction L-proline + a quinone = (S)-1-pyrroline-5-carboxylate + a quinol + H(+). The protein operates within amino-acid degradation; L-proline degradation into L-glutamate; L-glutamate from L-proline: step 1/2. In terms of biological role, converts proline to delta-1-pyrroline-5-carboxylate. The protein is Proline dehydrogenase 1, mitochondrial of Homo sapiens (Human).